Here is a 398-residue protein sequence, read N- to C-terminus: Ribosomal RNA large subunit methyltransferase F (398 aa).

Residues 1 to 12 show a composition bias toward basic residues; the sequence is MTPSRKPARPGA. The tract at residues 1-85 is disordered; it reads MTPSRKPARP…RNLHGQGYDF (85 aa). 2 stretches are compositionally biased toward low complexity: residues 20–40 and 48–59; these read PSAK…AQPK and QAKSQAKPQAKS.

It belongs to the methyltransferase superfamily. METTL16/RlmF family.

The protein localises to the cytoplasm. The catalysed reaction is adenosine(1618) in 23S rRNA + S-adenosyl-L-methionine = N(6)-methyladenosine(1618) in 23S rRNA + S-adenosyl-L-homocysteine + H(+). Functionally, specifically methylates the adenine in position 1618 of 23S rRNA. The chain is Ribosomal RNA large subunit methyltransferase F from Shewanella loihica (strain ATCC BAA-1088 / PV-4).